A 444-amino-acid polypeptide reads, in one-letter code: Chromosome partition protein MukF (444 aa).

The segment at 212–240 is leucine-zipper; it reads LDETSGNLRELQDTLNAAGDKLQAQLLRI.

The protein belongs to the MukF family. As to quaternary structure, interacts, and probably forms a ternary complex, with MukE and MukB via its C-terminal region. The complex formation is stimulated by calcium or magnesium. It is required for an interaction between MukE and MukB.

The protein localises to the cytoplasm. It localises to the nucleoid. Functionally, involved in chromosome condensation, segregation and cell cycle progression. May participate in facilitating chromosome segregation by condensation DNA from both sides of a centrally located replisome during cell division. Not required for mini-F plasmid partitioning. Probably acts via its interaction with MukB and MukE. Overexpression results in anucleate cells. It has a calcium binding activity. This is Chromosome partition protein MukF from Haemophilus influenzae (strain ATCC 51907 / DSM 11121 / KW20 / Rd).